Here is a 564-residue protein sequence, read N- to C-terminus: 5-hydroxytryptamine receptor 1 (564 aa).

The interval 1-26 (MALSGQDWRRHQSHRQHRNHRTQGNH) is disordered. The segment covering 11–23 (HQSHRQHRNHRTQ) has biased composition (basic residues). The chain crosses the membrane as a helical span at residues 29–51 (LISTATLTLFVLFLSSWIAYAAG). Repeat copies occupy residues 89–90 (GS), 91–92 (GS), 93–94 (GS), 95–96 (GS), 97–98 (GS), 99–100 (GS), 101–102 (GS), 103–104 (GS), and 105–106 (GS). The segment at 89-106 (GSGSGSGSGSGSGSGSGS) is 9 X 2 AA tandem repeats of G-S. The helical transmembrane segment at 165–188 (VSIVLLIVILGTVVGNVLVCIAVC) threads the bilayer. At 189 to 198 (MVRKLRRPCN) the chain is on the cytoplasmic side. Residues 199 to 222 (YLLVSLALSDLCVALLVMPMALLY) form a helical membrane-spanning segment. The Extracellular portion of the chain corresponds to 223–236 (EVLEKWNFGPLLCD). Cysteine 235 and cysteine 314 are joined by a disulfide. Residues 237–258 (IWVSFDVLCCTASILNLCAISV) form a helical membrane-spanning segment. Residues 238 to 247 (WVSFDVLCCT) are agonist binding. Residues aspartate 242 and threonine 247 each coordinate ergotamine. Positions 259–261 (DRY) match the DRY motif; important for ligand-induced conformation changes motif. The Cytoplasmic segment spans residues 259 to 278 (DRYLAITKPLEYGVKRTPRR). Residues 279–302 (MMLCVGIVWLAAACISLPPLLILG) form a helical membrane-spanning segment. Topologically, residues 303–330 (NEHEDEEGQPICTVCQNFAYQIYATLGS) are extracellular. A helical membrane pass occupies residues 331 to 353 (FYIPLSVMLFVYYQIFRAARRIV). At 354–454 (LEEKRAQTHL…QLAKEKKAST (101 aa)) the chain is on the cytoplasmic side. The disordered stretch occupies residues 367–396 (LNGTGSPSAPQAPPLGHTELASSGNGQRHS). The span at 386–396 (LASSGNGQRHS) shows a compositional bias: polar residues. Residues 455–476 (TLGIIMSAFTVCWLPFFILALI) form a helical membrane-spanning segment. Over 477–487 (RPFETMHVPAS) the chain is Extracellular. A helical membrane pass occupies residues 488 to 510 (LSSLFLWLGYANSLLNPIIYATL). The NPxxY motif; important for ligand-induced conformation changes and signaling motif lies at 503–507 (NPIIY). Residues 511–564 (NRDFRKPFQEILYFRCSSLNTMMRENYYQDQYGEPPSQRVMLGDERHGARESFL) lie on the Cytoplasmic side of the membrane.

The protein belongs to the G-protein coupled receptor 1 family. 5-hydroxytryptamine receptor subfamily. In terms of tissue distribution, expressed predominantly in adult heads.

Its subcellular location is the cell membrane. In terms of biological role, G-protein coupled receptor for 5-hydroxytryptamine (serotonin). Also functions as a receptor for various alkaloids. Ligand binding causes a conformation change that triggers signaling via guanine nucleotide-binding proteins (G proteins) and modulates the activity of down-stream effectors, such as adenylate cyclase. Signaling activates adenylate cyclase activity. This chain is 5-hydroxytryptamine receptor 1 (5-HT7), found in Drosophila melanogaster (Fruit fly).